The chain runs to 417 residues: Ribonucleoside-diphosphate reductase small chain (417 aa).

Asp168, Glu199, and His202 together coordinate Fe cation. The active site involves Tyr206. 3 residues coordinate Fe cation: Glu261, Glu297, and His300.

It belongs to the ribonucleoside diphosphate reductase small chain family. Heterotetramer composed of a homodimer of the large subunit (R1) and a homodimer of the small subunit (R2). Larger multisubunit protein complex are also active, composed of (R1)n(R2)n. Requires Fe cation as cofactor.

It catalyses the reaction a 2'-deoxyribonucleoside 5'-diphosphate + [thioredoxin]-disulfide + H2O = a ribonucleoside 5'-diphosphate + [thioredoxin]-dithiol. Ribonucleoside-diphosphate reductase holoenzyme provides the precursors necessary for viral DNA synthesis. Allows virus growth in non-dividing cells. Catalyzes the biosynthesis of deoxyribonucleotides from the corresponding ribonucleotides. The protein is Ribonucleoside-diphosphate reductase small chain (RNR2) of Acanthamoeba polyphaga mimivirus (APMV).